Consider the following 189-residue polypeptide: Large ribosomal subunit protein bL25 (189 aa).

Belongs to the bacterial ribosomal protein bL25 family. CTC subfamily. In terms of assembly, part of the 50S ribosomal subunit; part of the 5S rRNA/L5/L18/L25 subcomplex. Contacts the 5S rRNA. Binds to the 5S rRNA independently of L5 and L18.

Functionally, this is one of the proteins that binds to the 5S RNA in the ribosome where it forms part of the central protuberance. The chain is Large ribosomal subunit protein bL25 from Azobacteroides pseudotrichonymphae genomovar. CFP2.